The primary structure comprises 96 residues: Small ribosomal subunit protein bS18 (96 aa).

The segment covering 1–18 (MPPPRGKGRFGKDKRPKR) has biased composition (basic residues). Residues 1-21 (MPPPRGKGRFGKDKRPKRNTQ) form a disordered region.

This sequence belongs to the bacterial ribosomal protein bS18 family. In terms of assembly, part of the 30S ribosomal subunit. Forms a tight heterodimer with protein bS6.

Its function is as follows. Binds as a heterodimer with protein bS6 to the central domain of the 16S rRNA, where it helps stabilize the platform of the 30S subunit. In Methylibium petroleiphilum (strain ATCC BAA-1232 / LMG 22953 / PM1), this protein is Small ribosomal subunit protein bS18.